The primary structure comprises 39 residues: MTIERTYPIFTFRWLAIHGLAVPTVFFLGSISAMQFIQR.

Residues 14–30 (WLAIHGLAVPTVFFLGS) traverse the membrane as a helical segment. Heme is bound at residue His-18.

Belongs to the PsbE/PsbF family. Heterodimer of an alpha subunit and a beta subunit. PSII is composed of 1 copy each of membrane proteins PsbA, PsbB, PsbC, PsbD, PsbE, PsbF, PsbH, PsbI, PsbJ, PsbK, PsbL, PsbM, PsbT, PsbX, PsbY, PsbZ, Psb30/Ycf12, at least 3 peripheral proteins of the oxygen-evolving complex and a large number of cofactors. It forms dimeric complexes. Heme b serves as cofactor.

The protein resides in the plastid. The protein localises to the chloroplast thylakoid membrane. In terms of biological role, this b-type cytochrome is tightly associated with the reaction center of photosystem II (PSII). PSII is a light-driven water:plastoquinone oxidoreductase that uses light energy to abstract electrons from H(2)O, generating O(2) and a proton gradient subsequently used for ATP formation. It consists of a core antenna complex that captures photons, and an electron transfer chain that converts photonic excitation into a charge separation. The chain is Cytochrome b559 subunit beta from Staurastrum punctulatum (Green alga).